We begin with the raw amino-acid sequence, 126 residues long: Small ribosomal subunit protein bS6 (126 aa).

A disordered region spans residues 101–126 (VMMKAKEERSAKREDAAPRAEEAAAE). Basic and acidic residues predominate over residues 104-126 (KAKEERSAKREDAAPRAEEAAAE).

The protein belongs to the bacterial ribosomal protein bS6 family.

In terms of biological role, binds together with bS18 to 16S ribosomal RNA. This chain is Small ribosomal subunit protein bS6, found in Aliivibrio fischeri (strain ATCC 700601 / ES114) (Vibrio fischeri).